A 1245-amino-acid polypeptide reads, in one-letter code: TAL effector protein Brg11 (1245 aa).

Disordered regions lie at residues 1–87 (MRIG…LVPE) and 173–205 (CPQA…PTFL). Residues 67–87 (PRRPLPVAPASAPPAPSLVPE) are compositionally biased toward pro residues. Positions 185-191 (RSARARR) match the Nuclear localization signal 1 motif. The Cryptic repeat -1 repeat unit spans residues 286 to 320 (LTRAHIVDIARQRSGDLALQALLPVATALTAAPLR). Residues 321–354 (LSASQIATVAQYGERPAIQALYRLRRKLTRAPLH) form a Cryptic repeat 0 repeat. Core repeat repeat units follow at residues 355–389 (LTPQ…APYR), 390–424 (LSTE…APYV), 425–459 (LDTE…APYA), 460–494 (LSTE…APYA), 495–529 (LSTE…VPYA), 530–564 (LSTE…APYA), 565–599 (LSTA…APYG), 600–634 (LSTE…APYA), 635–669 (LSTE…APYA), 670–704 (LSTA…APYA), 705–739 (LSTE…APYA), 740–774 (LNTE…APYA), 775–809 (LSTA…APYA), 810–844 (LSTE…APYG), 845–879 (LSTA…TPYD), and 880–914 (LNTA…APYA). One copy of the Cryptic repeat +1 repeat lies at 915 to 948 (LSTAQVVAIACISGQQALEAIEAHMPTLRQASHS). A Cryptic repeat +2 repeat occupies 949 to 982 (LSPERVAAIACIGGRSAVEAVRQGLPVKAIRRIR). 3 consecutive short sequence motifs (nuclear localization signal) follow at residues 980 to 983 (RIRR), 1108 to 1111 (HRKR), and 1145 to 1148 (RRKR). The interval 1096 to 1138 (SPGMAGQSACSPHRKRPAETAIAPRSIRRSPNNAGQPSEPWPD) is disordered. Positions 1237-1245 (DWLLQILET) are activation domain.

The protein belongs to the transcription activator-like effector (TALE) family. RipTAL/RTL subfamily.

The protein resides in the secreted. Its subcellular location is the host nucleus. Its function is as follows. Exported into plant cells, where it is targeted to the nucleus and probably acts as a transcription factor. Binds DNA in a sequence-specific manner. May contribute to plant pathogenicity. This Ralstonia nicotianae (strain ATCC BAA-1114 / GMI1000) (Ralstonia solanacearum) protein is TAL effector protein Brg11.